Reading from the N-terminus, the 429-residue chain is Histidine--tRNA ligase (429 aa).

The protein belongs to the class-II aminoacyl-tRNA synthetase family. Homodimer.

It is found in the cytoplasm. It carries out the reaction tRNA(His) + L-histidine + ATP = L-histidyl-tRNA(His) + AMP + diphosphate + H(+). The chain is Histidine--tRNA ligase from Pseudomonas aeruginosa (strain UCBPP-PA14).